A 269-amino-acid polypeptide reads, in one-letter code: Tryptophan synthase alpha chain (269 aa).

Residues Glu50 and Asp61 each act as proton acceptor in the active site.

It belongs to the TrpA family. Tetramer of two alpha and two beta chains.

It carries out the reaction (1S,2R)-1-C-(indol-3-yl)glycerol 3-phosphate + L-serine = D-glyceraldehyde 3-phosphate + L-tryptophan + H2O. It functions in the pathway amino-acid biosynthesis; L-tryptophan biosynthesis; L-tryptophan from chorismate: step 5/5. Functionally, the alpha subunit is responsible for the aldol cleavage of indoleglycerol phosphate to indole and glyceraldehyde 3-phosphate. This is Tryptophan synthase alpha chain from Buchnera aphidicola subsp. Baizongia pistaciae (strain Bp).